We begin with the raw amino-acid sequence, 478 residues long: Trigger factor (478 aa).

A compositionally biased stretch (basic and acidic residues) spans 154 to 167 (MAKDSRSFEPREEG). Disordered stretches follow at residues 154 to 173 (MAKD…AQSG) and 444 to 478 (LFAE…KAAG). The 86-residue stretch at 173 to 258 (GDRVTIDFVG…VKAVAAPGET (86 aa)) folds into the PPIase FKBP-type domain.

The protein belongs to the FKBP-type PPIase family. Tig subfamily.

The protein localises to the cytoplasm. The catalysed reaction is [protein]-peptidylproline (omega=180) = [protein]-peptidylproline (omega=0). In terms of biological role, involved in protein export. Acts as a chaperone by maintaining the newly synthesized protein in an open conformation. Functions as a peptidyl-prolyl cis-trans isomerase. The sequence is that of Trigger factor from Methylorubrum populi (strain ATCC BAA-705 / NCIMB 13946 / BJ001) (Methylobacterium populi).